The following is a 346-amino-acid chain: uncharacterized protein (346 aa).

The protein belongs to the MG067/MG068/MG395 family.

This is an uncharacterized protein from Mycoplasma pneumoniae (strain ATCC 29342 / M129 / Subtype 1) (Mycoplasmoides pneumoniae).